Reading from the N-terminus, the 488-residue chain is Ribulose bisphosphate carboxylase large chain (488 aa).

Substrate-binding residues include Asn-127 and Thr-177. Lys-179 serves as the catalytic Proton acceptor. Lys-181 is a substrate binding site. 3 residues coordinate Mg(2+): Lys-205, Asp-207, and Glu-208. Residue Lys-205 is modified to N6-carboxylysine. The active-site Proton acceptor is the His-297. Substrate contacts are provided by Arg-298, His-330, and Ser-382.

This sequence belongs to the RuBisCO large chain family. Type I subfamily. In terms of assembly, heterohexadecamer of 8 large chains and 8 small chains. It depends on Mg(2+) as a cofactor.

The protein localises to the plastid. Its subcellular location is the chloroplast. It carries out the reaction 2 (2R)-3-phosphoglycerate + 2 H(+) = D-ribulose 1,5-bisphosphate + CO2 + H2O. The enzyme catalyses D-ribulose 1,5-bisphosphate + O2 = 2-phosphoglycolate + (2R)-3-phosphoglycerate + 2 H(+). In terms of biological role, ruBisCO catalyzes two reactions: the carboxylation of D-ribulose 1,5-bisphosphate, the primary event in carbon dioxide fixation, as well as the oxidative fragmentation of the pentose substrate in the photorespiration process. Both reactions occur simultaneously and in competition at the same active site. The chain is Ribulose bisphosphate carboxylase large chain from Rhodomonas salina (Cryptomonas salina).